The chain runs to 206 residues: Small ribosomal subunit protein uS4 (206 aa).

Residues 96 to 158 (SRLDNVVYRM…AKGQLRIKGA (63 aa)) enclose the S4 RNA-binding domain.

This sequence belongs to the universal ribosomal protein uS4 family. In terms of assembly, part of the 30S ribosomal subunit. Contacts protein S5. The interaction surface between S4 and S5 is involved in control of translational fidelity.

In terms of biological role, one of the primary rRNA binding proteins, it binds directly to 16S rRNA where it nucleates assembly of the body of the 30S subunit. Its function is as follows. With S5 and S12 plays an important role in translational accuracy. The protein is Small ribosomal subunit protein uS4 of Coxiella burnetii (strain CbuG_Q212) (Coxiella burnetii (strain Q212)).